The primary structure comprises 88 residues: Phosphocarrier protein HPr (88 aa).

Residues 1-88 (MKTQQFTVID…TLLTEMGLAQ (88 aa)) enclose the HPr domain. His-15 functions as the Pros-phosphohistidine intermediate in the catalytic mechanism. Ser-46 bears the Phosphoserine; by HPrK/P mark.

It belongs to the HPr family.

Its subcellular location is the cytoplasm. Its activity is regulated as follows. Phosphorylation on Ser-46 inhibits the phosphoryl transfer from enzyme I to HPr. Functionally, general (non sugar-specific) component of the phosphoenolpyruvate-dependent sugar phosphotransferase system (sugar PTS). This major carbohydrate active-transport system catalyzes the phosphorylation of incoming sugar substrates concomitantly with their translocation across the cell membrane. The phosphoryl group from phosphoenolpyruvate (PEP) is transferred to the phosphoryl carrier protein HPr by enzyme I. Phospho-HPr then transfers it to the PTS EIIA domain. In terms of biological role, P-Ser-HPr interacts with the catabolite control protein A (CcpA), forming a complex that binds to DNA at the catabolite response elements cre, operator sites preceding a large number of catabolite-regulated genes. Thus, P-Ser-HPr is a corepressor in carbon catabolite repression (CCR), a mechanism that allows bacteria to coordinate and optimize the utilization of available carbon sources. P-Ser-HPr also plays a role in inducer exclusion, in which it probably interacts with several non-PTS permeases and inhibits their transport activity. The polypeptide is Phosphocarrier protein HPr (ptsH) (Lysinibacillus sphaericus (Bacillus sphaericus)).